Reading from the N-terminus, the 497-residue chain is MRRNILTALACSWLTAHAASVDLKSLLLESDIQWASDTVISFSDTPEFEDATVRWNSYNAPTYAGAISPADEEDVVKVVKLAKEHNVPFLATGGRHGCTDMVGLQEGLAIDLSQINSYEVDSDDATVTVGAGSTFGQFQNAIHDAGFMIQSGSVTCPGFIGITLGGGIGRYTGIFGLEIDALISARIVTADGEVLTISETENAELFWGVRGAGFNFGIVTSATYKLHKLADNNNGEILTADFIIPANKTLFYFDWLESLGETMPPNAAGVSRFQFDSIAKEGQIGANWVFIGPEDEGREFLSPILDLQPSVAMLSYVPWNKLIETAGGGQGAMLCEARAPRSLFTGQMRKYTALTLQETFDKITTLWETHPGLAYTSLNFEAFPNHAAVAVPDDATAYPWRDAIGWFQFEIISLEGVGSDSFNAGEHAGQVLRDSWVRTSGYDNHTIYVNYARGDETLEQKYGASKLPRLAALKKKYDPDNVFGWNNALPTEYPGSG.

The N-terminal stretch at 1–18 is a signal peptide; sequence MRRNILTALACSWLTAHA. Residues 59 to 229 enclose the FAD-binding PCMH-type domain; sequence NAPTYAGAIS…TSATYKLHKL (171 aa).

Belongs to the oxygen-dependent FAD-linked oxidoreductase family. Requires FAD as cofactor.

It functions in the pathway secondary metabolite biosynthesis. FAD-linked oxidoreductase; part of the gene cluster that mediates the biosynthesis of flavoglaucin and congeners (including aspergin, dihydroauroglaucin and auroglaucin), prenylated salicylaldehyde derivatives carrying a saturated or an unsaturated C-7 side chain. The PKS fogA releases the carboxylic acid (8E,10E,12E)-3,5,7-trihydroxytetradeca-8,10,12-trienoic acid as its product, as well as derivatives with one and two double bonds. FogA is indeed able to reduce the initial triketide, thus being at least partially responsible for the differently saturated heptyl side chains of flavoglaucin congeners. The oxidoreductases fogB, fogC and fogD modify the nascent polyketide in fogA-bound form and, together, fogA, fogB, fogC and fogD are necessary for the formation of the aromatic core and the cyclized PKS products are released as salicyl alcohols. In particular, fogB is responsible for oxidation of a hydroxyl group or reduction of remaining double bond(s) at the C-7 residue whereas fogD is probably involved in the reductive release of the modified PKS products. The cytochrome P450 monooxygenase fogE is then responsible for the hydroxylation at C-3 of the benzene ring. The fogE products are substrates of the prenyltransferase fogH and the prenylated benzyl alcohols are subsequently oxidized by the fogF to produce the final aryl aldehydes flavoglaucin and congeners. The short-chain dehydrogenase fogG does not seem to be involved in the biosynthesis of the prenylated salicylaldehyde derivatives. In Aspergillus ruber (strain CBS 135680), this protein is FAD-linked oxidoreductase fogF.